The chain runs to 254 residues: Triosephosphate isomerase (254 aa).

A substrate-binding site is contributed by 12-14 (NWK). Catalysis depends on His-99, which acts as the Electrophile. Glu-169 functions as the Proton acceptor in the catalytic mechanism. Residues Gly-175, Ser-214, and 235–236 (GG) each bind substrate.

It belongs to the triosephosphate isomerase family. Homodimer.

It is found in the cytoplasm. The catalysed reaction is D-glyceraldehyde 3-phosphate = dihydroxyacetone phosphate. It participates in carbohydrate biosynthesis; gluconeogenesis. Its pathway is carbohydrate degradation; glycolysis; D-glyceraldehyde 3-phosphate from glycerone phosphate: step 1/1. Functionally, involved in the gluconeogenesis. Catalyzes stereospecifically the conversion of dihydroxyacetone phosphate (DHAP) to D-glyceraldehyde-3-phosphate (G3P). The polypeptide is Triosephosphate isomerase (Bartonella quintana (strain Toulouse) (Rochalimaea quintana)).